The primary structure comprises 300 residues: Metal tolerance protein 12 (300 aa).

Residues 1–26 (MESPESFSTMFMKPIRHILSEKKSRK) lie on the Cytoplasmic side of the membrane. The helical transmembrane segment at 27–47 (IALFLLINTAYMVVEFVAGFM) threads the bilayer. The Vacuolar segment spans residues 48 to 50 (SNS). A helical transmembrane segment spans residues 51–71 (LGLISDACHMLFDCAALAIGL). Residues 72–91 (YASYISRLPANHQYNYGRGR) lie on the Cytoplasmic side of the membrane. A helical transmembrane segment spans residues 92–112 (FEVLSGYVNAVFLVLVGALIV). Residues 113–128 (LESIERILDPQEISTN) are Vacuolar-facing. A helical transmembrane segment spans residues 129–149 (SLLVVSVGGLLVNIVGLIFFH). Over 150–160 (EEHHHAHGGSG) the chain is Cytoplasmic. The chain crosses the membrane as a helical span at residues 161 to 181 (IFLHVLADTMGSVGVVISTLL). The Vacuolar portion of the chain corresponds to 182–186 (IKYKG). The chain crosses the membrane as a helical span at residues 187 to 207 (WLVADPASSIFISILIIASVI). Topologically, residues 208–300 (PLLRNSAEIL…WTLQVESVNS (93 aa)) are cytoplasmic.

This sequence belongs to the cation diffusion facilitator (CDF) transporter (TC 2.A.4) family. SLC30A subfamily.

Its subcellular location is the vacuole membrane. In terms of biological role, involved in sequestration of excess metal in the cytoplasm into vacuoles to maintain metal homeostasis. The polypeptide is Metal tolerance protein 12 (MTP12) (Arabidopsis thaliana (Mouse-ear cress)).